The sequence spans 1460 residues: MGRYSVSPVPKCLLLMFLGWSGLKYYQVNAAQLREYHIAAQLEDWDYNPQPEELSRLSESDLTFKKIVYREYELDFKQEEPRDALSGLLGPTLRGEVGDSLIIYFKNFATQPVSIHPQSAVYNKWSEGSSYSDGTSDVERLDDAVPPGQSFKYVWNITAEIGPKKADPPCLTYAYYSHVNMVRDFNSGLIGALLICKEGSLNANGSQKFFNREYVLMFSVFDESKNWYRKPSLQYTINGFANGTLPDVQACAYDHISWHLIGMSSSPEIFSVHFNGQTLEQNHYKVSTINLVGGASVTADMSVSRTGKWLISSLVAKHLQAGMYGYLNIKDCGNPDTLTRKLSFRELMKIKNWEYFIAAEEITWDYAPEIPSSVDRRYKAQYLDNFSNFIGKKYKKAVFRQYEDGNFTKPTYAIWPKERGILGPVIKAKVRDTVTIVFKNLASRPYSIYVHGVSVSKDAEGAIYPSDPKENITHGKAVEPGQVYTYKWTVLDTDEPTVKDSECITKLYHSAVDMTRDIASGLIGPLLVCKHKALSVKGVQNKADVEQHAVFAVFDENKSWYLEDNIKKYCSNPSAVKKDDPKFYKSNVMYTLNGYASDRTEVLRFHQSEVVQWHLTSVGTVDEIVPVHLSGHTFLSKGKHQDILNLFPMSGESATVTMDNLGTWLLSSWGSCEMSNGMRLRFLDANYDDEDEGNEEEEEDDGDIFADIFIPSEVVKKKEEVPVNFVPDPESDALAKELGLIDDEGNPIIQPRREQTEDDEEQLMKASMLGLRSFKGSVAEEELKHTALALEEDAHASDPRIDSNSARNPDDIAGRYLRTINRGNKRRYYIAAEEVLWDYSPIGKSQVRSRAAKTTFKKAIFRSYLDDTFQTPSTGGEYEKHLGILGPIIRAEVDDVIEIQFKNLASRPYSLHAHGLLYEKSSEGRSYDDKSPELFKKDDAIMPNGTYTYVWQVPPRSGPTDNTEKCKSWAYYSGVNPEKDIHSGLIGPILICQKGMIDKYNRTIDIREFVLFFMVFDEEKSWYFPKSDKSTCEEKLIGVQSLHTFPAINGIPYQLQGLTMYKDENVHWHLLNMGGPKDIHVVNFHGQTFTEEGREDNQLGVLPLLPGTFASIKMKPSKIGTWLLETEVGENQERGMQALFTVIDKDCKLPMGLASGIIQDSQISASGHVGYWEPKLARLNNTGKYNAWSIIKKEHEHPWIQIDLQRQVVITGIQTQGTVQLLQHSYTVEYFVTYSEDGQNWITFKGRHSETQMHFEGNSDGTTVKENHIDPPIIARYIRLHPTKFYNRPTFRIELLGCEVEGCSVPLGMESGAIKNSEITASSYKKTWWSSWEPSLARLNLEGGTNAWQPEVNNKDQWLQIDLQHLTKITSIITQGATSMTTSMYVKTFSIHYTDDNSTWKPYLDVRTSMEKVFTGNINSDGHVKHFFKPPILSRFIRIIPKTWNQYIALRIELFGCEVF.

A signal peptide spans 1 to 30 (MGRYSVSPVPKCLLLMFLGWSGLKYYQVNA). One can recognise a Plastocyanin-like 1 domain in the interval 32–196 (QLREYHIAAQ…SGLIGALLIC (165 aa)). 2 consecutive F5/8 type A domains span residues 32–330 (QLRE…LNIK) and 351–685 (KNWE…FLDA). Ca(2+) contacts are provided by Lys-124, Glu-139, Asp-142, and Asp-143. Asn-156 carries an N-linked (GlcNAc...) asparagine glycan. The cysteines at positions 170 and 196 are disulfide-linked. N-linked (GlcNAc...) asparagine glycans are attached at residues Asn-204 and Asn-242. Plastocyanin-like domains follow at residues 206–330 (SQKF…LNIK), 351–529 (KNWE…LLVC), and 539–685 (VQNK…FLDA). Cysteines 251 and 332 form a disulfide. 2 N-linked (GlcNAc...) asparagine glycosylation sites follow: Asn-406 and Asn-471. The cysteines at positions 503 and 529 are disulfide-linked. Asn-557 carries an N-linked (GlcNAc...) asparagine glycan. 4 disulfide bridges follow: Cys-672–Cys-1032, Cys-966–Cys-992, Cys-1147–Cys-1298, and Cys-1303–Cys-1457. Residues 693–818 (GNEEEEEDDG…PDDIAGRYLR (126 aa)) form a b region. A propeptide spans 773–818 (SFKGSVAEEELKHTALALEEDAHASDPRIDSNSARNPDDIAGRYLR) (activation peptide (connecting region)). 2 Plastocyanin-like domains span residues 824-992 (NKRR…ILIC) and 1001-1143 (NRTI…FTVI). The 320-residue stretch at 824 to 1143 (NKRRYYIAAE…RGMQALFTVI (320 aa)) folds into the F5/8 type A 3 domain. Lys-920, Phe-935, Asp-938, and Asp-939 together coordinate Ca(2+). Asn-944 is a glycosylation site (N-linked (GlcNAc...) asparagine). N-linked (GlcNAc...) asparagine glycosylation is found at Asn-1001 and Asn-1180. F5/8 type C domains are found at residues 1147–1298 (CKLP…LLGC) and 1303–1457 (CSVP…LFGC).

Belongs to the multicopper oxidase family. As to quaternary structure, heterodimer of a light and a heavy chains; non-disulfide-linked. The interaction between the two chains is calcium-dependent. Found in its active form associated with pseutarin-C catalytic subunit (AC Q56VR3). In terms of processing, in physiological conditions, blood coagulation factor V and factor Va are inactivated by activated protein C (APC) through proteolytic degradation of the heavy chain. However, pseutarin-C non-catalytic subunit (factor V-like protein) retains its full activity even at high concentration of APC. This has two explanations: this protein has only one of the three cleavage sites present in factor V that are targeted by the APC for inactivation, and the binding with the catalytic subunit protect the cleavage site from inactivation. As to expression, expressed by the venom gland.

Its subcellular location is the secreted. In terms of biological role, snake prothrombin activator that attacks the hemostatic system of prey. This non-catalytic subunit is functionally similar to blood coagulation factor V. It serves as a critical cofactor for the prothrombinase activity of the catalytic subunit, which is similar to the blood coagulation factor X. The complex converts prothrombin to thrombin by sequential cleavage at two positions, Arg-320 followed by Arg-271. Cleavage at Arg-320 produces an active intermediate known as meizothrombin. Meizothrombin is the 'second' substrate for prothrombinase, and it docks in an altered manner to present the second cleavage site (271). Cleavage at Arg-271 releases active thrombin from its pro-fragment. This order of events is reversed if the protease component of prothrombinase is used on its own, suggesting that the 271 site is inherently more accessible to proteolysis. The complex converts prothrombin to thrombin in presence but also in the absence of membrane. The protein is Venom prothrombin activator pseutarin-C non-catalytic subunit of Pseudonaja textilis (Eastern brown snake).